An 858-amino-acid polypeptide reads, in one-letter code: Heat shock protein 105 kDa (858 aa).

At S2 the chain carries N-acetylserine. The residue at position 471 (K471) is an N6-acetyllysine. Disordered regions lie at residues 500-585 (KVPT…PPEA) and 801-858 (VTQP…MDLD). A compositionally biased stretch (acidic residues) spans 504-515 (EEEDGSSVEADM). Phosphoserine occurs at positions 509 and 510. Over residues 533–555 (QQDNSEAGTQPQVQTDGQQTSQS) the composition is skewed to polar residues. S558 is subject to Phosphoserine. Residue T562 is modified to Phosphothreonine. Basic and acidic residues-rich tracts occupy residues 564–585 (EENKIPDADKANEKKVDQPPEA) and 806–815 (PKIESPKLER). S810 bears the Phosphoserine mark. Phosphothreonine is present on T816.

Belongs to the heat shock protein 70 family. In terms of assembly, interacts with HSPA8/HSC70. Interacts with HSPA1A (via NBD) and HSPA1B (via NBD). Post-translationally, phosphorylation on Ser-509 may be important for regulation of the HSPA8/HSC70 chaperone activity.

It localises to the cytoplasm. Acts as a nucleotide-exchange factor (NEF) for chaperone proteins HSPA1A and HSPA1B, promoting the release of ADP from HSPA1A/B thereby triggering substrate release. Prevents the aggregation of denatured proteins in cells under severe stress, on which the ATP levels decrease markedly. Inhibits HSPA8/HSC70 ATPase and chaperone activities. The sequence is that of Heat shock protein 105 kDa (Hsph1) from Rattus norvegicus (Rat).